Reading from the N-terminus, the 463-residue chain is Hydrolase pyiE (463 aa).

S252 serves as the catalytic Nucleophile. A disordered region spans residues 350–373 (KSDGSRANGKKSHSPTDGGGVESD).

It belongs to the AB hydrolase superfamily. FUS2 hydrolase family. As to quaternary structure, homodimer.

The protein operates within mycotoxin biosynthesis. Its function is as follows. Hydrolyase; part of the gene cluster that mediates the biosynthesis of the mycotoxin pyrichalasin H, a tyrosine-derived cytochalasan that inhibits the growth of rice seedlings, but also inhibits lymphocyte capping and actin polymerization and alters cell morphology. Pyrichalasin H is indicated as the responsible agent for the genus-specific pathogenicity of M.grisea toward crabgrass. The first step in the pathway is catalyzed by the O-methyltransferase pyiA which methylates free tyrosine to generate the precursor O-methyltyrosine. The hybrid PKS-NRPS pyiS, assisted by the enoyl reductase pyiC, are responsible for fusion of the O-methyltyrosine precursor and the polyketide backbone. The polyketide synthase module (PKS) of pyiS is responsible for the synthesis of the polyketide backbone and the downstream nonribosomal peptide synthetase (NRPS) amidates the carboxyl end of the polyketide with the O-methyltyrosine precursor. As the NRPS A-domain demonstrates substrate tolerance, pyiS can also use phenylalanine, tyrosine and even para-chlorophenylalanine as amino acid precursor, which leads to the production of novel cytochalasans, including halogenated cytochalasans. Because pyiS lacks a designated enoylreductase (ER) domain, the required activity is provided the enoyl reductase pyiC. Reduction by the hydrolyase pyiE leads to 1,5-dihydropyrrolone, which is substrate for dehydration and intra-molecular Diels-Alder cyclization by the Diels-Alderase pyiF to yield the required isoindolone-fused macrocycle. The tailoring cytochrome P450 monooxygenases piyD and piyG catalyze the hydroxylation at C-18 and C-7, respectivily, whereas the short-chain dehydrogenase/reductase pyiH reduces the carbonyl at C-21 in preparation for the transfer of an acetyl group by the acetyltransferase pyiB. These 3 reactions whose order is not clear yet, lead to the production of O-methylpyrichalasin J, a deacetylated pyrichalasin H. Finally, pyiB to converts O-methylpyrichalasin J into the final product pyrichalasin H via acetylation of C-21. The protein is Hydrolase pyiE of Pyricularia grisea (Crabgrass-specific blast fungus).